Here is a 157-residue protein sequence, read N- to C-terminus: Small ribosomal subunit protein uS7 (157 aa).

It belongs to the universal ribosomal protein uS7 family. As to quaternary structure, part of the 30S ribosomal subunit. Contacts proteins S9 and S11.

Functionally, one of the primary rRNA binding proteins, it binds directly to 16S rRNA where it nucleates assembly of the head domain of the 30S subunit. Is located at the subunit interface close to the decoding center, probably blocks exit of the E-site tRNA. This is Small ribosomal subunit protein uS7 from Chlamydia abortus (strain DSM 27085 / S26/3) (Chlamydophila abortus).